We begin with the raw amino-acid sequence, 508 residues long: tRNA-2-methylthio-N(6)-dimethylallyladenosine synthase (508 aa).

Positions 13 to 131 (KTYEVRTYGC…LPVLLERARV (119 aa)) constitute an MTTase N-terminal domain. [4Fe-4S] cluster-binding residues include Cys-22, Cys-60, Cys-94, Cys-168, Cys-172, and Cys-175. Residues 154–385 (RESAYAAWVS…ALQEEISWDE (232 aa)) enclose the Radical SAM core domain. The TRAM domain maps to 387 to 455 (KKQVGRTLEL…PHHLLAEGPV (69 aa)).

Belongs to the methylthiotransferase family. MiaB subfamily. As to quaternary structure, monomer. Requires [4Fe-4S] cluster as cofactor.

The protein resides in the cytoplasm. The enzyme catalyses N(6)-dimethylallyladenosine(37) in tRNA + (sulfur carrier)-SH + AH2 + 2 S-adenosyl-L-methionine = 2-methylsulfanyl-N(6)-dimethylallyladenosine(37) in tRNA + (sulfur carrier)-H + 5'-deoxyadenosine + L-methionine + A + S-adenosyl-L-homocysteine + 2 H(+). In terms of biological role, catalyzes the methylthiolation of N6-(dimethylallyl)adenosine (i(6)A), leading to the formation of 2-methylthio-N6-(dimethylallyl)adenosine (ms(2)i(6)A) at position 37 in tRNAs that read codons beginning with uridine. The protein is tRNA-2-methylthio-N(6)-dimethylallyladenosine synthase of Streptomyces avermitilis (strain ATCC 31267 / DSM 46492 / JCM 5070 / NBRC 14893 / NCIMB 12804 / NRRL 8165 / MA-4680).